Reading from the N-terminus, the 129-residue chain is MAEKTITVEEVLKHNTRDDLYIVVKDKVYDISKFLDAHPGGEEVLVDLAGRDASGPFEDVGHSEDAQELLEKFYIGNLLRTEDGPQLPTTGAAAGGSGYDSSQPVKPAMWLFVLVMVVAYFAFRKYVLK.

The Cytochrome b5 heme-binding domain maps to 3-79 (EKTITVEEVL…LEKFYIGNLL (77 aa)). His-38 and His-62 together coordinate heme. A helical transmembrane segment spans residues 105–125 (VKPAMWLFVLVMVVAYFAFRK).

It belongs to the cytochrome b5 family.

The protein resides in the endoplasmic reticulum membrane. It localises to the microsome membrane. Its subcellular location is the mitochondrion. Its function is as follows. Membrane bound hemoprotein which function as an electron carrier for several membrane bound oxygenases. This is Probable cytochrome b5 2 (oca8) from Schizosaccharomyces pombe (strain 972 / ATCC 24843) (Fission yeast).